We begin with the raw amino-acid sequence, 264 residues long: tRNA (guanine-N(1)-)-methyltransferase (264 aa).

149 to 154 serves as a coordination point for S-adenosyl-L-methionine; it reads IGDYVL.

This sequence belongs to the RNA methyltransferase TrmD family. Homodimer.

The protein localises to the cytoplasm. The enzyme catalyses guanosine(37) in tRNA + S-adenosyl-L-methionine = N(1)-methylguanosine(37) in tRNA + S-adenosyl-L-homocysteine + H(+). Its function is as follows. Specifically methylates guanosine-37 in various tRNAs. The protein is tRNA (guanine-N(1)-)-methyltransferase of Methylobacillus flagellatus (strain ATCC 51484 / DSM 6875 / VKM B-1610 / KT).